The primary structure comprises 335 residues: Urokinase plasminogen activator surface receptor (335 aa).

The signal sequence occupies residues 1–22; it reads MGHPLLLPLLLLLHTCVPASWG. 3 consecutive UPAR/Ly6 domains span residues 23–114, 115–213, and 214–305; these read LRCM…RSRY, LECI…PQNG, and HQCY…YRKG. Cystine bridges form between Cys25–Cys46, Cys28–Cys34, and Cys39–Cys67. The N-linked (GlcNAc...) asparagine glycan is linked to Asn74. Intrachain disulfides connect Cys93-Cys98, Cys117-Cys144, Cys120-Cys127, Cys137-Cys169, Cys175-Cys192, Cys193-Cys198, Cys216-Cys244, Cys219-Cys227, Cys237-Cys263, Cys269-Cys287, and Cys288-Cys293. Residues Asn184, Asn194, Asn222, Asn255, and Asn284 are each glycosylated (N-linked (GlcNAc...) asparagine). Residue Gly305 is the site of GPI-anchor amidated glycine attachment. The propeptide at 306-335 is removed in mature form; the sequence is AAPQPGPAHLSLTITLLMTARLWGGTLLWT.

As to quaternary structure, monomer. Interacts (via the UPAR/Ly6 domains) with SRPX2. Interacts with MRC2. Interacts with FAP (seprase); the interaction occurs at the cell surface of invadopodia membrane. Interacts with SORL1 (via N-terminal ectodomain); this interaction decreases PLAUR internalization. The ternary complex composed of PLAUR-PLAU-SERPINE1 also interacts with SORL1.

The protein resides in the cell membrane. It localises to the cell projection. The protein localises to the invadopodium membrane. Its function is as follows. Acts as a receptor for urokinase plasminogen activator. Plays a role in localizing and promoting plasmin formation. Mediates the proteolysis-independent signal transduction activation effects of U-PA. It is subject to negative-feedback regulation by U-PA which cleaves it into an inactive form. The chain is Urokinase plasminogen activator surface receptor (PLAUR) from Macaca fascicularis (Crab-eating macaque).